The following is a 252-amino-acid chain: Phosphoglycolate phosphatase (252 aa).

D13 acts as the Nucleophile in catalysis. Residues D13, D15, and D192 each contribute to the Mg(2+) site.

This sequence belongs to the HAD-like hydrolase superfamily. CbbY/CbbZ/Gph/YieH family. Monomer. Mg(2+) serves as cofactor. It depends on chloride as a cofactor.

The enzyme catalyses 2-phosphoglycolate + H2O = glycolate + phosphate. The protein operates within organic acid metabolism; glycolate biosynthesis; glycolate from 2-phosphoglycolate: step 1/1. Its function is as follows. Specifically catalyzes the dephosphorylation of 2-phosphoglycolate. Is involved in the dissimilation of the intracellular 2-phosphoglycolate formed during the DNA repair of 3'-phosphoglycolate ends, a major class of DNA lesions induced by oxidative stress. The sequence is that of Phosphoglycolate phosphatase from Escherichia coli O157:H7.